A 1060-amino-acid polypeptide reads, in one-letter code: Centrosomal protein of 131 kDa (1060 aa).

Residues 1–11 (MKGSRTITATP) are compositionally biased toward polar residues. The segment at 1–96 (MKGSRTITAT…TGSPRPAEPT (96 aa)) is disordered. The interval 1-244 (MKGSRTITAT…SQSARGTTGL (244 aa)) is interaction with PLK4. Phosphoserine occurs at positions 14 and 35. 2 stretches are compositionally biased toward polar residues: residues 32–50 (RPGS…SVAT) and 73–88 (LRRS…SWTG). Ser-47 carries the phosphoserine; by MAPKAPK2 modification. At Ser-78 the chain carries Phosphoserine; by MAPKAPK2 and PLK4. Residues Ser-89, Ser-105, Ser-114, Ser-146, and Ser-150 each carry the phosphoserine modification. Disordered stretches follow at residues 136 to 155 (LALP…LGPR) and 217 to 248 (EGGE…LRRR). Positions 217-226 (EGGEGSDLGK) are enriched in basic and acidic residues. One can recognise an IQ domain in the interval 263–283 (NQAAVTIQRWYRCQVQRRRAG). Composition is skewed to basic and acidic residues over residues 314–327 (EEAA…EKAR) and 344–363 (KASE…RAPE). The disordered stretch occupies residues 314–437 (EEAARKKARE…VSGSSRGKAR (124 aa)). Over residues 398–408 (ASESSPEQWQS) the composition is skewed to low complexity. A compositionally biased stretch (basic and acidic residues) spans 409-424 (PEDKPQDIHSQGEARQ). The residue at position 473 (Thr-473) is a Phosphothreonine. At Ser-481 the chain carries Phosphoserine.

The protein belongs to the CEP131 family. Self-associates. Associates with the centriolar satellite BBSome protein complex Interacts with BBS4; the interaction limits BBS4 availability for association with the BBSome complex, and hence negatively regulates ciliary localization of the BBSome complex. Interacts with MIB1. Interacts with PCM1; the interaction increases in response to ultraviolet light (UV) radiation. Associates with microtubule; association to microtubule is reduced in response to cellular stress, such as UV stimulation, in a process that requires p38 MAP kinase signaling. Interacts with CEP290, DCTN1, MAP1LC3B, PCNT, PCM1 and CEP152. Interacts with 14-3-3 proteins following UV-induced phosphorylation by MAPKAPK2; this inhibits formation of novel centriolar satellites. Interacts with SDCCAG8. Interacts with CCDC61. Interacts with PLK4. In terms of processing, ubiquitinated. Undergoes monoubiquitination catalyzed by the E3 ubiquitin-protein ligase MIB1 in proliferating cells, preventing cilia formation. Monoubiquitination by MIB1 is inhibited in response to cellular stress, such as ultraviolet light (UV) radiation or heat shock, resulting in ciliogenesis restoration. MAPKAPK2-dependent phosphorylation at Ser-47 and Ser-78 occurs in response to cellular stress such as exposure to ultraviolet irradiation and promotes binding to 14-3-3 proteins which leads to cytoplasmic sequestration of CEP131 and blocks formation of new centriolar satellites. Phosphorylation at Ser-78 mediated by PLK4 is essential for proper organization and integrity of centriolar satellites but is dispensable for its localization to centrioles and its function in ciliogenesis. Localized to the pre-acrosome region of round and elongated spermatids in testis but also present in ovary, brain and adipose tissue.

It is found in the cytoplasm. It localises to the cytoskeleton. The protein resides in the microtubule organizing center. The protein localises to the centrosome. Its subcellular location is the centriolar satellite. It is found in the centriole. It localises to the cilium basal body. The protein resides in the cytoplasmic vesicle. The protein localises to the secretory vesicle. Its subcellular location is the acrosome. Component of centriolar satellites contributing to the building of a complex and dynamic network required to regulate cilia/flagellum formation. In proliferating cells, MIB1-mediated ubiquitination induces its sequestration within centriolar satellites, precluding untimely cilia formation initiation. In contrast, during normal and ultraviolet or heat shock cellular stress-induced ciliogenesis, its non-ubiquitinated form is rapidly displaced from centriolar satellites and recruited to centrosome/basal bodies in a microtubule- and p38 MAPK-dependent manner. Also acts as a negative regulator of BBSome ciliary trafficking. Plays a role in sperm flagellar formation; may be involved in the regulation of intraflagellar transport (IFT) and/or intramanchette (IMT) trafficking, which are important for axoneme extension and/or cargo delivery to the nascent sperm tail. Required for optimal cell proliferation and cell cycle progression; may play a role in the regulation of genome stability and centriole duplication in non-ciliogenic cells. Involved in centriole duplication. Required for CEP152, WDR62 and CEP63 centrosomal localization and promotes the centrosomal localization of CDK2. Essential for maintaining proper centriolar satellite integrity. The sequence is that of Centrosomal protein of 131 kDa (Cep131) from Mus musculus (Mouse).